The following is a 149-amino-acid chain: Pleckstrin homology domain-containing family J member 1 (149 aa).

The region spanning 15 to 108 (PAEMAAELGM…WMAALRQASY (94 aa)) is the PH domain.

The protein is Pleckstrin homology domain-containing family J member 1 (PLEKHJ1) of Bos taurus (Bovine).